Here is a 474-residue protein sequence, read N- to C-terminus: tRNA-2-methylthio-N(6)-dimethylallyladenosine synthase (474 aa).

In terms of domain architecture, MTTase N-terminal spans 3 to 120; that stretch reads KKLHIKTWGC…LPEMLNHVQG (118 aa). Residues Cys-12, Cys-49, Cys-83, Cys-157, Cys-161, and Cys-164 each coordinate [4Fe-4S] cluster. Positions 143–375 constitute a Radical SAM core domain; the sequence is RAEGPTAFVS…QDRINQQVLQ (233 aa). The region spanning 378 to 441 is the TRAM domain; that stretch reads RRMLGTVQRI…TNSLRGTVVR (64 aa).

The protein belongs to the methylthiotransferase family. MiaB subfamily. In terms of assembly, monomer. It depends on [4Fe-4S] cluster as a cofactor.

Its subcellular location is the cytoplasm. It catalyses the reaction N(6)-dimethylallyladenosine(37) in tRNA + (sulfur carrier)-SH + AH2 + 2 S-adenosyl-L-methionine = 2-methylsulfanyl-N(6)-dimethylallyladenosine(37) in tRNA + (sulfur carrier)-H + 5'-deoxyadenosine + L-methionine + A + S-adenosyl-L-homocysteine + 2 H(+). Catalyzes the methylthiolation of N6-(dimethylallyl)adenosine (i(6)A), leading to the formation of 2-methylthio-N6-(dimethylallyl)adenosine (ms(2)i(6)A) at position 37 in tRNAs that read codons beginning with uridine. The chain is tRNA-2-methylthio-N(6)-dimethylallyladenosine synthase from Serratia proteamaculans (strain 568).